The primary structure comprises 407 residues: F-box protein SKIP23 (407 aa).

The F-box domain occupies 2–50 (VDWSTLPKDLLDLISKSLESSFDLIQFRSVCSSWRSAAEPKSPLPTHHL).

As to quaternary structure, part of a SCF (ASK-cullin-F-box) protein ligase complex. Interacts with SKP1A/ASK1.

It localises to the nucleus. It functions in the pathway protein modification; protein ubiquitination. Component of SCF(ASK-cullin-F-box) E3 ubiquitin ligase complexes, which may mediate the ubiquitination and subsequent proteasomal degradation of target proteins. The sequence is that of F-box protein SKIP23 (SKIP23) from Arabidopsis thaliana (Mouse-ear cress).